The following is a 201-amino-acid chain: Kinetochore protein SPC24 homolog (201 aa).

Residues 78–133 (DIAAEDEIERLQKELDEEMEREFKLKDELRLVADELKDLNAQLSSIDEHKQSTKRK) adopt a coiled-coil conformation.

Belongs to the SPC24 family. In terms of assembly, component of the NDC80 complex, which consists of NDC80, NUF2, SPC24 and SPC25. In terms of tissue distribution, highly expressed in actively dividing tissues, such as shoot apical meristem (SAM), root apical meristem (RAM), vasculature, newly emerging leaves and inflorescence shoots.

Its subcellular location is the chromosome. It is found in the centromere. Functionally, acts as a component of the essential kinetochore-associated NDC80 complex, which is required for chromosome segregation and spindle checkpoint activity to ensure proper cell division. Required for the maintenance of plant architecture. This chain is Kinetochore protein SPC24 homolog, found in Arabidopsis thaliana (Mouse-ear cress).